Here is a 150-residue protein sequence, read N- to C-terminus: Deoxyuridine 5'-triphosphate nucleotidohydrolase (150 aa).

Substrate-binding positions include 69-71 (RSG), Asn82, 86-88 (LID), and Lys96.

It belongs to the dUTPase family. Mg(2+) is required as a cofactor.

It carries out the reaction dUTP + H2O = dUMP + diphosphate + H(+). Its pathway is pyrimidine metabolism; dUMP biosynthesis; dUMP from dCTP (dUTP route): step 2/2. In terms of biological role, this enzyme is involved in nucleotide metabolism: it produces dUMP, the immediate precursor of thymidine nucleotides and it decreases the intracellular concentration of dUTP so that uracil cannot be incorporated into DNA. This Neisseria gonorrhoeae (strain NCCP11945) protein is Deoxyuridine 5'-triphosphate nucleotidohydrolase.